A 150-amino-acid chain; its full sequence is Ribonuclease H (150 aa).

One can recognise an RNase H type-1 domain in the interval 7–148 (ERPRVEIWTD…VDQLATRGRE (142 aa)). Mg(2+) is bound by residues D16, E54, D76, and D140.

This sequence belongs to the RNase H family. In terms of assembly, monomer. It depends on Mg(2+) as a cofactor.

It is found in the cytoplasm. The catalysed reaction is Endonucleolytic cleavage to 5'-phosphomonoester.. Endonuclease that specifically degrades the RNA of RNA-DNA hybrids. This chain is Ribonuclease H, found in Gluconobacter oxydans (strain 621H) (Gluconobacter suboxydans).